We begin with the raw amino-acid sequence, 395 residues long: Mannan polymerase complexes subunit MNN9 (395 aa).

Residues 2 to 17 (SLSLVSYRLRKNPWVN) lie on the Cytoplasmic side of the membrane. Residues 18–33 (IFLPVLAIFLIYIIFF) form a helical; Signal-anchor for type II membrane protein membrane-spanning segment. Over 34-395 (QRDQSLLGLN…LVYHIEEENH (362 aa)) the chain is Lumenal.

It belongs to the ANP1/MMN9/VAN1 family. As to quaternary structure, the M-Pol I complex contains MNN9 and VAN1. The M-Pol II complex is composed of ANP1, MNN9, MNN10, MNN11 and HOC1.

Its subcellular location is the endoplasmic reticulum membrane. It is found in the golgi apparatus membrane. It participates in protein modification; protein glycosylation. The M-Pol I and M-Pol II complexes possess alpha-1,6-mannosyltransferase activity and are probably involved in the elongation of the mannan backbone of N-linked glycans on cell wall and periplasmic proteins. May also provide alpha-1,2-mannosyltransferase activity to the M-Pol I complex. This Saccharomyces cerevisiae (strain ATCC 204508 / S288c) (Baker's yeast) protein is Mannan polymerase complexes subunit MNN9 (MNN9).